Reading from the N-terminus, the 266-residue chain is Serine/arginine-rich splicing factor 12 (266 aa).

A disordered region spans residues 42–266; that stretch reads ARPRRPRAPR…SRSYHHKNSW (225 aa). Over residues 43 to 62 the composition is skewed to basic residues; sequence RPRRPRAPRPRLRLRGRPGR. Basic and acidic residues predominate over residues 102–114; it reads KSKERHLCSPSDH. Basic residues predominate over residues 115-127; the sequence is RRSRSPSQRRSRS. Basic and acidic residues predominate over residues 133 to 144; it reads GRDRRHSDSLKE. The segment covering 151 to 166 has biased composition (low complexity); the sequence is SYSQSKSRSKSLPRQS. Residues 183-194 are compositionally biased toward basic residues; it reads GRSRSKSLPKRS. Composition is skewed to polar residues over residues 202–212 and 235–244; these read SRSPQKQTGSG and AYTSSGSKTQ. The segment covering 245-266 has biased composition (basic residues); it reads TTKHSHLRSHSRSRSYHHKNSW.

It belongs to the splicing factor SR family.

Its subcellular location is the nucleus. In terms of biological role, splicing factor that seems to antagonize SR proteins in pre-mRNA splicing regulation. The chain is Serine/arginine-rich splicing factor 12 (Srsf12) from Mus musculus (Mouse).